The following is a 509-amino-acid chain: 3-octaprenyl-4-hydroxybenzoate carboxy-lyase (509 aa).

Asn179 serves as a coordination point for Mn(2+). Residues 182-184, 196-198, and 201-202 contribute to the prenylated FMN site; these read IYR, RWL, and RG. Residue Glu245 participates in Mn(2+) binding. Residue Asp304 is the Proton donor of the active site.

It belongs to the UbiD family. In terms of assembly, homohexamer. Requires prenylated FMN as cofactor. Mn(2+) is required as a cofactor.

The protein resides in the cell membrane. It carries out the reaction a 4-hydroxy-3-(all-trans-polyprenyl)benzoate + H(+) = a 2-(all-trans-polyprenyl)phenol + CO2. It participates in cofactor biosynthesis; ubiquinone biosynthesis. In terms of biological role, catalyzes the decarboxylation of 3-octaprenyl-4-hydroxy benzoate to 2-octaprenylphenol, an intermediate step in ubiquinone biosynthesis. This is 3-octaprenyl-4-hydroxybenzoate carboxy-lyase from Cupriavidus pinatubonensis (strain JMP 134 / LMG 1197) (Cupriavidus necator (strain JMP 134)).